The primary structure comprises 504 residues: Maturase K (504 aa).

This sequence belongs to the intron maturase 2 family. MatK subfamily.

The protein resides in the plastid. The protein localises to the chloroplast. Usually encoded in the trnK tRNA gene intron. Probably assists in splicing its own and other chloroplast group II introns. The sequence is that of Maturase K from Cardamine amara (Large bitter-cress).